The primary structure comprises 399 residues: Chromosomal replication initiator protein DnaA (399 aa).

The segment at 1 to 64 (MELNALIKKI…EEEVRKLIEV (64 aa)) is domain I, interacts with DnaA modulators. The tract at residues 64–77 (VKEKEEKKKVEIKD) is domain II. The segment at 78–290 (FLNPKYTLEN…GKIKLIKLKG (213 aa)) is domain III, AAA+ region. Isoleucine 89, asparagine 94, glycine 122, threonine 123, glycine 124, lysine 125, threonine 126, and histidine 127 together coordinate ADP. Isoleucine 89 contributes to the ATP binding site. Glycine 122 contributes to the ATP binding site. Glycine 124, lysine 125, threonine 126, and histidine 127 together coordinate ATP. Threonine 126 serves as a coordination point for Mg(2+). Residue valine 156 participates in ssDNA binding. Residue aspartate 180 participates in ATP binding. Aspartate 181 is a Mg(2+) binding site. SsDNA-binding residues include lysine 188, arginine 190, and threonine 191. Residue arginine 277 participates in ATP binding. The segment at 291–399 (FEGLERKERK…LEKQAFDKIC (109 aa)) is domain IV, binds dsDNA.

Belongs to the DnaA family. As to quaternary structure, in the presence of ATP analog AMP-PCP forms a linear, right-handed spiral filament with 4 subunits arranged head-to-tail, about 122 Angstroms wide and about 360 Angstroms long. Mg(2+)-AMP-PCP binds at the subunit interface with the gamma phosphate coordinated by adjacent subunits. dsDNA probably wraps on the outside of the filament. ssDNA binds to the center of the helical filament via the AAA+ domain, which stretches the DNA.

It localises to the cytoplasm. Its function is as follows. Plays an essential role in the initiation and regulation of chromosomal replication. ATP-DnaA binds to the origin of replication (oriC) to initiate formation of the DNA replication initiation complex once per cell cycle. Binds the DnaA box (a 9 base pair repeat at the origin) and separates the double-stranded (ds)DNA. Forms a right-handed helical filament on oriC DNA; dsDNA binds to the exterior of the filament while single-stranded (ss)DNA is stabiized in the filament's interior. The ATP-DnaA-oriC complex binds and stabilizes one strand of the AT-rich DNA unwinding element (DUE), permitting loading of DNA polymerase. After initiation quickly degrades to an ADP-DnaA complex that is not apt for DNA replication. Binds acidic phospholipids. In terms of biological role, able to melt short unstable dsDNA (15-mer with melting temperature, TM, 43 degrees Celsius) in the presence of a non-hydrolyzable ATP analog; a more stable dsDNA (20-mer, TM 55 degrees Celsius) is poor substrate. ADP does not support dsDNA melting. Addition of DnaA-AMP-PCP (an ATP analog, beta,gamma-methyleneadenosine 5'-triphosphate) to an oric-containing plasmid causes a DNA shift to more positively supercoiled topological species, stabilizing a positive wrap and right-handed filament as seen in the crystal structure without DNA. Filament formation generated by positive supercoiling may destabilize the origin unwinding element through compensatory negative supercoiling strain. The sequence is that of Chromosomal replication initiator protein DnaA from Aquifex aeolicus (strain VF5).